Reading from the N-terminus, the 617-residue chain is Putative type VI secretion system protein VgrGB (617 aa).

The interval 449–469 is disordered; it reads RTFHATNPSPYPLPASKTRTS.

It belongs to the VgrG protein family.

A Vgr protein that is probably part of a type VI secretion system (T6SS). May be required for export of proteins involved in Rhs-mediated cellular contact-dependent growth inhibition (CDI). The sequence is that of Putative type VI secretion system protein VgrGB (vgrGB) from Dickeya dadantii (strain 3937) (Erwinia chrysanthemi (strain 3937)).